The primary structure comprises 119 residues: Large ribosomal subunit protein uL18 (119 aa).

It belongs to the universal ribosomal protein uL18 family. Part of the 50S ribosomal subunit; part of the 5S rRNA/L5/L18/L25 subcomplex. Contacts the 5S and 23S rRNAs.

In terms of biological role, this is one of the proteins that bind and probably mediate the attachment of the 5S RNA into the large ribosomal subunit, where it forms part of the central protuberance. The sequence is that of Large ribosomal subunit protein uL18 from Anaeromyxobacter dehalogenans (strain 2CP-C).